The sequence spans 146 residues: Large ribosomal subunit protein uL15 (146 aa).

Over residues 1-13 (MKLHELKPAEGSR) the composition is skewed to basic and acidic residues. The segment at 1–57 (MKLHELKPAEGSRKVRNRVGRGTSSGNGKTSGRGQKGQKARSGVGLRPGFEGGQTPL) is disordered. The span at 23-35 (TSSGNGKTSGRGQ) shows a compositional bias: gly residues.

This sequence belongs to the universal ribosomal protein uL15 family. Part of the 50S ribosomal subunit.

Functionally, binds to the 23S rRNA. The chain is Large ribosomal subunit protein uL15 from Streptococcus thermophilus (strain ATCC BAA-491 / LMD-9).